Here is a 171-residue protein sequence, read N- to C-terminus: Ribosome maturation factor RimM (171 aa).

The region spanning 97-169 is the PRC barrel domain; sequence DGEFYYHEII…RVDVDIMEGL (73 aa).

Belongs to the RimM family. In terms of assembly, binds ribosomal protein uS19.

The protein localises to the cytoplasm. An accessory protein needed during the final step in the assembly of 30S ribosomal subunit, possibly for assembly of the head region. Essential for efficient processing of 16S rRNA. May be needed both before and after RbfA during the maturation of 16S rRNA. It has affinity for free ribosomal 30S subunits but not for 70S ribosomes. In Lactococcus lactis subsp. cremoris (strain SK11), this protein is Ribosome maturation factor RimM.